We begin with the raw amino-acid sequence, 74 residues long: Large ribosomal subunit protein bL27c (74 aa).

Belongs to the bacterial ribosomal protein bL27 family.

The protein localises to the plastid. It localises to the chloroplast. The protein is Large ribosomal subunit protein bL27c (rpl27) of Calyptrosphaera sphaeroidea.